A 422-amino-acid chain; its full sequence is Tyrosine--tRNA ligase (422 aa).

Tyrosine 37 is a binding site for L-tyrosine. A 'HIGH' region motif is present at residues 42 to 51 (PTEESLHIGH). L-tyrosine is bound by residues tyrosine 175 and glutamine 179. The 'KMSKS' region motif lies at 235 to 239 (KFGKT). Lysine 238 contacts ATP. Positions 357–414 (KDLQEALVLTSLAQSRTQAKNMIISNSISINTEKIRKNHIFHEKDKLFGKFTLLSRGK) constitute an S4 RNA-binding domain.

This sequence belongs to the class-I aminoacyl-tRNA synthetase family. TyrS type 1 subfamily. In terms of assembly, homodimer.

The protein localises to the cytoplasm. It carries out the reaction tRNA(Tyr) + L-tyrosine + ATP = L-tyrosyl-tRNA(Tyr) + AMP + diphosphate + H(+). Catalyzes the attachment of tyrosine to tRNA(Tyr) in a two-step reaction: tyrosine is first activated by ATP to form Tyr-AMP and then transferred to the acceptor end of tRNA(Tyr). The protein is Tyrosine--tRNA ligase of Buchnera aphidicola subsp. Acyrthosiphon pisum (strain Tuc7).